An 853-amino-acid chain; its full sequence is DNA mismatch repair protein MutS (853 aa).

614–621 lines the ATP pocket; sequence GPNMGGKS.

The protein belongs to the DNA mismatch repair MutS family.

In terms of biological role, this protein is involved in the repair of mismatches in DNA. It is possible that it carries out the mismatch recognition step. This protein has a weak ATPase activity. This is DNA mismatch repair protein MutS from Escherichia coli (strain 55989 / EAEC).